Reading from the N-terminus, the 763-residue chain is MSELLSFALFLASVLIYAWKAGRNTWWFAATLTVLGLFVVLNITLFASDYFTGDGINDAVLYTLTNSLTGAGVSKYILPGIGIVLGLAAVFGALGWILRRRRHHPHHFGYSLLALLLALGSVDASPAFRQITELVKSQSRDGDPDFTAYYKEPSKTIPDPKLNLVYIYGESLERTYFDNEVFPDLTPELGALKNEGLDFSHTQQLPGTDYTIAGMVASQCGIPLFAPFEGNASASVSSFFPQNICLGDILKNSGYQNYFVQGANLRFAGKDVFLKSHGFDHLYGSEELKSVVADPHYRNDWGFYDDTVLDEAWKKFEELSRSGQRFSLFTLTVDTHHPDGFISRTCNRKKYDFDGKPNQSFSAVSCSQENIATFINKIKASPWFKDTVIVVSSDHLAMNNTAWKYLNKQDRNNLFFVIRGDKPQQETLAVKRNTMDNGATVLDILGGDNYLGLGRSSLSGQSMSEIFLNIKEKTLAWKPDIIRLWKFPKEMKEFTIDQQKNMIAFSGSHFRLPLLLRVSDKRVEPLPESEYSAPLRFQLADFAPRDNFVWVDRCYKMAQLWAPELALSTDWCVSQGQLGGQQIVQHVDKAIWKGKTAFKDTVIDMARYKGNVDTLKIVDNDIRYKADSFIFNVAGAPEEVKQFSGISRPESWGRWSNAQLGDEVKIEYKHPLPKKFDLVITAKAYGNNASRPIPVRVGNEEQALVLGNEVTTTTLHFDNPTDADTLVIVPPEPVSTNEGNILGHSPRKLGIGMVEIKVVEREG.

4 helical membrane-spanning segments follow: residues 1–21, 26–46, 77–97, and 108–128; these read MSEL…AWKA, WWFA…ITLF, ILPG…LGWI, and FGYS…SPAF.

It belongs to the OpgB family.

It is found in the cell inner membrane. The enzyme catalyses a phosphatidylglycerol + a membrane-derived-oligosaccharide D-glucose = a 1,2-diacyl-sn-glycerol + a membrane-derived-oligosaccharide 6-(glycerophospho)-D-glucose.. Its pathway is glycan metabolism; osmoregulated periplasmic glucan (OPG) biosynthesis. Its function is as follows. Transfers a phosphoglycerol residue from phosphatidylglycerol to the membrane-bound nascent glucan backbones. This is Phosphoglycerol transferase I from Escherichia coli O6:K15:H31 (strain 536 / UPEC).